A 1234-amino-acid chain; its full sequence is DNA-directed RNA polymerase subunit beta (1234 aa).

It belongs to the RNA polymerase beta chain family. The RNAP catalytic core consists of 2 alpha, 1 beta, 1 beta' and 1 omega subunit. When a sigma factor is associated with the core the holoenzyme is formed, which can initiate transcription.

It carries out the reaction RNA(n) + a ribonucleoside 5'-triphosphate = RNA(n+1) + diphosphate. Its function is as follows. DNA-dependent RNA polymerase catalyzes the transcription of DNA into RNA using the four ribonucleoside triphosphates as substrates. In Clostridium perfringens (strain ATCC 13124 / DSM 756 / JCM 1290 / NCIMB 6125 / NCTC 8237 / Type A), this protein is DNA-directed RNA polymerase subunit beta.